A 435-amino-acid chain; its full sequence is 3-phosphoshikimate 1-carboxyvinyltransferase (435 aa).

Residues lysine 22, serine 23, and arginine 27 each contribute to the 3-phosphoshikimate site. Lysine 22 lines the phosphoenolpyruvate pocket. The phosphoenolpyruvate site is built by glycine 95 and arginine 123. Residues serine 168, glutamine 170, aspartate 319, and lysine 346 each coordinate 3-phosphoshikimate. Phosphoenolpyruvate is bound at residue glutamine 170. The Proton acceptor role is filled by aspartate 319. Positions 350 and 393 each coordinate phosphoenolpyruvate.

Belongs to the EPSP synthase family. In terms of assembly, monomer.

The protein localises to the cytoplasm. The catalysed reaction is 3-phosphoshikimate + phosphoenolpyruvate = 5-O-(1-carboxyvinyl)-3-phosphoshikimate + phosphate. It functions in the pathway metabolic intermediate biosynthesis; chorismate biosynthesis; chorismate from D-erythrose 4-phosphate and phosphoenolpyruvate: step 6/7. Its function is as follows. Catalyzes the transfer of the enolpyruvyl moiety of phosphoenolpyruvate (PEP) to the 5-hydroxyl of shikimate-3-phosphate (S3P) to produce enolpyruvyl shikimate-3-phosphate and inorganic phosphate. The protein is 3-phosphoshikimate 1-carboxyvinyltransferase of Chloroflexus aggregans (strain MD-66 / DSM 9485).